The chain runs to 284 residues: Phosphatidylglycerol--prolipoprotein diacylglyceryl transferase (284 aa).

7 helical membrane passes run 14-34 (IAFSLGSIEVHWYGLAYACAI), 62-82 (YFLWAELGIVLGARVGYILIY), 106-126 (FVGIRGMSYHGGLVGFLIASY), 136-156 (LLIYLDLIAISLPLGYVFGRI), 190-210 (PSQLIEAFLEGVIVFLMVLWA), 218-238 (GLLIVVYGLGYSLMRFIAEFY), and 252-272 (LSMGQILSLLMVIVSLGILLY). Residue arginine 155 participates in a 1,2-diacyl-sn-glycero-3-phospho-(1'-sn-glycerol) binding.

This sequence belongs to the Lgt family.

Its subcellular location is the cell inner membrane. It catalyses the reaction L-cysteinyl-[prolipoprotein] + a 1,2-diacyl-sn-glycero-3-phospho-(1'-sn-glycerol) = an S-1,2-diacyl-sn-glyceryl-L-cysteinyl-[prolipoprotein] + sn-glycerol 1-phosphate + H(+). It functions in the pathway protein modification; lipoprotein biosynthesis (diacylglyceryl transfer). Catalyzes the transfer of the diacylglyceryl group from phosphatidylglycerol to the sulfhydryl group of the N-terminal cysteine of a prolipoprotein, the first step in the formation of mature lipoproteins. This Helicobacter pylori (strain Shi470) protein is Phosphatidylglycerol--prolipoprotein diacylglyceryl transferase.